A 274-amino-acid polypeptide reads, in one-letter code: MPDIFQQEARGWLRCGAPPFAGAVAGLTTKHGGESKGPFASLNMGLHVGDDRTDVVNNRRRLAEWLAFPLERWVCCEQVHGADIQKVTKSDRGNGAQDFATAVPGVDGLYTDEAGVLLALCFADCVPIYFVAPSAGLVGLAHAGWRGTAGGIAGHMVWLWQTREHIAPSDIYVAIGPAIGPCCYTVDDRVVDSLRPTLPPESPLPWRETSPGQYALDLKEANRLQLLAAGVPNSHIYVSERCTSCEEALFFSHRRDRGTTGRMLAFIGRREEWT.

Position 46–47 (46–47 (LH)) interacts with inosine. The Zn(2+) site is built by His-80, Cys-125, His-142, Cys-182, Cys-183, Cys-242, and Cys-245. Inosine is bound at residue Arg-262.

The protein belongs to the purine nucleoside phosphorylase YfiH/LACC1 family. It depends on Zn(2+) as a cofactor.

The enzyme catalyses adenosine + phosphate = alpha-D-ribose 1-phosphate + adenine. It catalyses the reaction S-methyl-5'-thioadenosine + phosphate = 5-(methylsulfanyl)-alpha-D-ribose 1-phosphate + adenine. It carries out the reaction inosine + phosphate = alpha-D-ribose 1-phosphate + hypoxanthine. The catalysed reaction is adenosine + H2O + H(+) = inosine + NH4(+). Its function is as follows. Purine nucleoside enzyme that catalyzes the phosphorolysis of adenosine and inosine nucleosides, yielding D-ribose 1-phosphate and the respective free bases, adenine and hypoxanthine. Also catalyzes the phosphorolysis of S-methyl-5'-thioadenosine into adenine and S-methyl-5-thio-alpha-D-ribose 1-phosphate. Also has adenosine deaminase activity. The protein is Purine nucleoside phosphorylase YlmD of Geobacillus stearothermophilus (strain DSM 13240 / CIP 106956 / 10).